The primary structure comprises 247 residues: MSEEYEVTFIDRDERSARFLVRGVTPAFANGLRRAMIADVPTLSIDTLRVVENSSVMFDEQLALRLGLVPLTTPDDYEPGETVTLAIDVEGPATAYSGDLVSSDDKVQPADENIPIIELKDDQQLELEADATLGRGKDHAKHQGGVAVGYRHLQRVEVVGEKGEFEDDEPEILRGVIEEDGDLIETGEFDNDLSQRYPGKEVEVEEVPNAFVFDVETDGSMPVEELVLKAAESIAARADELEEAVAL.

Belongs to the archaeal Rpo3/eukaryotic RPB3 RNA polymerase subunit family. In terms of assembly, part of the RNA polymerase complex.

It localises to the cytoplasm. The enzyme catalyses RNA(n) + a ribonucleoside 5'-triphosphate = RNA(n+1) + diphosphate. Functionally, DNA-dependent RNA polymerase (RNAP) catalyzes the transcription of DNA into RNA using the four ribonucleoside triphosphates as substrates. This Natronomonas pharaonis (strain ATCC 35678 / DSM 2160 / CIP 103997 / JCM 8858 / NBRC 14720 / NCIMB 2260 / Gabara) (Halobacterium pharaonis) protein is DNA-directed RNA polymerase subunit Rpo3.